The chain runs to 1287 residues: MSGGGGGGGSAPSRFADYFVICGLDTETGLEPDELSALCQYIQASKARDGASPFISSTTEGENFEQTPLRRTFKSKVLARYPENVDWNPFDQDAVGMLCMPKGLAFKTQADPREPQFHAFIITREDGSRTFGFALTFYEEVTSKQICSAMQTLYHMHNAEYDVLHAPLADGGDQSGMEDGEGIPGTKLQRFNSYDISRDTLYVSKCICLITPMSFMKACRSVLQQLHQAVTSPQPPPLPLESYIYNVLYEVPLPPPGRSLKFSGVYGPIICQRPSTNELPLFDFPVKEVFELLGVENVFQLFTCALLEFQILLYSQHYQRLMTVAETITALMFPFQWQHVYVPILPASLLHFLDAPVPYLMGLHSNGLDDRSKLELPQEANLCFVDVDNHFIELPEDLPQFPNKLEFVQEVSEILMAFGVPPEGNLHCSESASKLKRIRASELVSDKRNGNIAGSPLHSYELLKENETIARLQALVKRTGVSLEKLEVREDPSSNKDFKVQCDEEELRIYQLNIQIREVFANRFTQMFADYEVFVIQPSQDKESWFTNREQMQNFDKASFLSDQPEPYLPFLSRFLETQMFASFIDNKIMCHDDDDKDPVLRVFDSRVDKIRLLNVRTPTLRTSMYQKCTTVDEAEKAIELRLAKIDHTAVHPHLLDMKIGQGKYEPGFFPKLQSDVLCTGPASNKWTKRNAPAQWRRKDRQKQHTEHLRLDNDQREKYIQEARNMGSTIRQPKLSNLSPSVIAQTNWKFVEGLLKECRNKTKRMLVEKMGREAVELGHGEVNITGVEENTLIASLCDLLERIWSHGLQVKQGKSALWSHLLHYQENRQRKLTSGSLSTSGILLDSERRKSDASAVMSPLRISLIQDMRHIQNIGEIKTDVGKARAWVRLSMEKKLLSRHLKQLLSDHELTKKLYKRYAFLRCDDEKEQFLYHLLSFNAVDYFCFTNVFTTILIPYHILIVPSKKLGGSMFTANPWICISGELGETQILQIPRNVLEMTFECQNLGKLTTVQIGHDNSGLYAKWLVECVMVRNEVTGHTYKFPCGRWLGKGMDDGSLERVLVGELLTSLPEVDERPCRTPPLQQSPSVIRRLVTISPNNKPKLNTGQIQESIGEAVNGIVKHFHKPEKERGSLTLLLCGECGLVSALEQAFQHGFKSPRLFKNVFIWDFLEKAQTYYETLEQNDVVPEENWHTRARNFCRFVTAVNNTPRNIGKDGKFQMLVCLGARDHLLHHWIALLADCPITAHMYEDVALIKDHTLVNSLIRVLQTLQEFNITLDTSLVKGIDI.

The region spanning 57–259 is the uDENN domain; that stretch reads STTEGENFEQ…EVPLPPPGRS (203 aa). Serine 193 bears the Phosphoserine mark. Positions 278–414 constitute a cDENN domain; it reads ELPLFDFPVK…LEFVQEVSEI (137 aa). The region spanning 416–598 is the dDENN domain; the sequence is MAFGVPPEGN…IMCHDDDDKD (183 aa). The 164-residue stretch at 787–950 folds into the RUN 1 domain; the sequence is VEENTLIASL…DYFCFTNVFT (164 aa). The PLAT domain occupies 954 to 1062; the sequence is IPYHILIVPS…DDGSLERVLV (109 aa). Threonine 1079 is modified (phosphothreonine). Residues serine 1085, serine 1087, and serine 1096 each carry the phosphoserine modification. An RUN 2 domain is found at 1134–1280; it reads TLLLCGECGL…QEFNITLDTS (147 aa).

This sequence belongs to the RAB6IP1 family. In terms of assembly, interacts with RAB6A bound to GTP.

It is found in the golgi apparatus membrane. Its function is as follows. Guanine nucleotide exchange factor (GEF) which may activate RAB6A and RAB39A and/or RAB39B. Promotes the exchange of GDP to GTP, converting inactive GDP-bound Rab proteins into their active GTP-bound form. Involved in the negative regulation of neurite outgrowth. The protein is DENN domain-containing protein 5A (Dennd5a) of Mus musculus (Mouse).